The following is a 765-amino-acid chain: Protein transport protein Sec23A (765 aa).

Zn(2+) contacts are provided by C61, C66, C85, and C88. The stretch at 632-718 (PEPVLLDSSS…EHGGSQARFL (87 aa)) is one Gelsolin-like repeat.

It belongs to the SEC23/SEC24 family. SEC23 subfamily. In terms of assembly, COPII is composed of at least five proteins: the Sec23/24 complex, the Sec13/31 complex and Sar1.

The protein resides in the cytoplasmic vesicle. It localises to the COPII-coated vesicle membrane. The protein localises to the endoplasmic reticulum membrane. Its subcellular location is the cytoplasm. It is found in the cytosol. Its function is as follows. Component of the coat protein complex II (COPII) which promotes the formation of transport vesicles from the endoplasmic reticulum (ER). The coat has two main functions, the physical deformation of the endoplasmic reticulum membrane into vesicles and the selection of cargo molecules for their transport to the Golgi complex. This Danio rerio (Zebrafish) protein is Protein transport protein Sec23A.